Consider the following 583-residue polypeptide: MASKVSPSCRLVFCLLISAAVLRPGLGWYTVNSAYGDTIVMPCRLDVPQNLMFGKWKYEKPDGSPVFIAFRSSTKKSVQYDDVPEYKDRLSLSENYTLSIANAKISDEKRFVCMLVTEDNVFEAPTLVKVFKQPSKPEIVNKAPFLETDQLKKLGDCISRDSYPDGNITWYRNGKVLQPVEGEVAILFKKEIDPGTQLYTVTSSLEYKTTRSDIQMPFTCSVTYYGPSGQKTIYSEQEIFDIYYPTEQVTIQVLPPKNAIKEGDNITLQCLGNGNPPPEEFMFYLPGQPEGIRSSNTYTLTDVRRNATGDYKCSLIDKRNMAASTTITVHYLDLSLNPSGEVTKQIGDTLPVSCTISASRNATVVWMKDNIRLRSSPSFSSLHYQDAGNYVCETALQEVEGLKKRESLTLIVEGKPQIKMTKKTDPSGLSKTIICHVEGFPKPAIHWTITGSGSVINQTEESPYINGRYYSKIIISPEENVTLTCTAENQLERTVNSLNVSAISIPEHDEADDISDENREKVNDQAKLIVGIVVGLLLAALVAGVVYWLYMKKSKTASKHVNKDLGNMEENKKLEENNHKTEA.

Positions 1–27 are cleaved as a signal peptide; sequence MASKVSPSCRLVFCLLISAAVLRPGLG. Ig-like V-type domains are found at residues 28-120 and 125-234; these read WYTV…TEDN and PTLV…KTIY. The Extracellular portion of the chain corresponds to 28 to 527; that stretch reads WYTVNSAYGD…NREKVNDQAK (500 aa). 2 disulfide bridges follow: C43–C113 and C157–C220. N95, N167, N265, N306, N361, N457, N480, and N499 each carry an N-linked (GlcNAc...) asparagine glycan. 3 Ig-like C2-type domains span residues 245–328, 333–409, and 416–501; these read PTEQ…TTIT, DLSL…ESLT, and PQIK…LNVS. 3 disulfide bridges follow: C270/C313, C354/C392, and C435/C485. A helical membrane pass occupies residues 528–549; sequence LIVGIVVGLLLAALVAGVVYWL. The Cytoplasmic segment spans residues 550-583; it reads YMKKSKTASKHVNKDLGNMEENKKLEENNHKTEA. Residues 562-583 form a disordered region; the sequence is NKDLGNMEENKKLEENNHKTEA. Over residues 569 to 583 the composition is skewed to basic and acidic residues; it reads EENKKLEENNHKTEA.

As to quaternary structure, homodimer. Interacts (via extracellular domain) with CD6 (via extracellular domain). Homodimerization and interaction with CD6 involve the same region and cannot occur simultaneously. The affinity for CD6 is much higher than the affinity for self-association. Interacts (via glycosylated extracellular domain) with LGALS1 and LGALS3. Interaction with LGALS1 or LGALS3 inhibits interaction with CD6. Post-translationally, glycosylated. In terms of tissue distribution, detected on brain motor neurons, in differentiating retinal ganglion cells and in adult retina. Detected on leukocytes and on lymphatic endothelial cells. Detected in spleen B cells and T-cells (at protein level). Detected in adult brain and embryonic spinal cord. Expressed at high levels in the brain, and lung, and at lower levels in the liver, and the kidney, as well as by activated leukocytes.

Its subcellular location is the cell membrane. The protein resides in the cell projection. The protein localises to the axon. It localises to the dendrite. Functionally, cell adhesion molecule that mediates both heterotypic cell-cell contacts via its interaction with CD6, as well as homotypic cell-cell contacts. Promotes T-cell activation and proliferation via its interactions with CD6. Contributes to the formation and maturation of the immunological synapse via its interactions with CD6. Mediates homotypic interactions with cells that express ALCAM. Mediates attachment of dendritic cells onto endothelial cells via homotypic interaction. Inhibits endothelial cell migration and promotes endothelial tube formation via homotypic interactions. Required for normal organization of the lymph vessel network. Required for normal hematopoietic stem cell engraftment in the bone marrow. Plays a role in hematopoiesis; required for normal numbers of hematopoietic stem cells in bone marrow. Promotes in vitro osteoblast proliferation and differentiation. Promotes neurite extension, axon growth and axon guidance; axons grow preferentially on surfaces that contain ALCAM. Mediates outgrowth and pathfinding for retinal ganglion cell axons. This chain is CD166 antigen (Alcam), found in Mus musculus (Mouse).